Consider the following 691-residue polypeptide: Protein 4.2 (691 aa).

G2 carries the N-myristoyl glycine lipid modification. A band 3 binding region spans residues 31 to 39 (LFVRRGQPF). At S248 the chain carries Phosphoserine; by PKA.

This sequence belongs to the transglutaminase superfamily. Transglutaminase family. In terms of assembly, component of the ankyrin-1 complex in the erythrocyte, composed of ANK1, RHCE, RHAG, SLC4A1, EPB42, GYPA, GYPB and AQP1. Interacts with SLC4A1 (via the cytoplasmic domain); this interaction is mediated by the SLC4A1 Band 3-I dimer. Interacts with ANK1 (via ANK 1-13 repeats). Interacts with AQP1 (via the C-terminal). In terms of processing, both cAMP-dependent kinase (CAPK) and another kinase present in the red-blood cells seem to be able to phosphorylate EPB42.

The protein resides in the cell membrane. The protein localises to the cytoplasm. Its subcellular location is the cytoskeleton. Component of the ankyrin-1 complex, a multiprotein complex involved in the stability and shape of the erythrocyte membrane. This Homo sapiens (Human) protein is Protein 4.2.